Here is a 173-residue protein sequence, read N- to C-terminus: Superoxide dismutase [Cu-Zn] (173 aa).

The N-terminal stretch at 1-19 (MKSLFIASTMVLMAFPAFA) is a signal peptide. Cu cation-binding residues include H67, H69, and H92. A disulfide bridge links C74 with C169. The Zn(2+) site is built by H92, H101, H109, and D112. Position 147 (H147) interacts with Cu cation.

The protein belongs to the Cu-Zn superoxide dismutase family. In terms of assembly, homodimer. Cu cation is required as a cofactor. Requires Zn(2+) as cofactor.

The protein resides in the periplasm. The catalysed reaction is 2 superoxide + 2 H(+) = H2O2 + O2. Destroys radicals which are normally produced within the cells and which are toxic to biological systems. This Brucella abortus biovar 1 (strain 9-941) protein is Superoxide dismutase [Cu-Zn] (sodC).